Reading from the N-terminus, the 504-residue chain is Histidine ammonia-lyase (504 aa).

A cross-link (5-imidazolinone (Ala-Gly)) is located at residues 141 to 143 (ASG). The residue at position 142 (serine 142) is a 2,3-didehydroalanine (Ser).

Belongs to the PAL/histidase family. Contains an active site 4-methylidene-imidazol-5-one (MIO), which is formed autocatalytically by cyclization and dehydration of residues Ala-Ser-Gly.

Its subcellular location is the cytoplasm. The catalysed reaction is L-histidine = trans-urocanate + NH4(+). Its pathway is amino-acid degradation; L-histidine degradation into L-glutamate; N-formimidoyl-L-glutamate from L-histidine: step 1/3. The chain is Histidine ammonia-lyase from Geobacillus kaustophilus (strain HTA426).